Reading from the N-terminus, the 139-residue chain is Small ribosomal subunit protein uS12 (139 aa).

The tract at residues 1–21 (MPTINQLVRKGRKAVQEKSTA) is disordered. Asp102 carries the post-translational modification 3-methylthioaspartic acid.

This sequence belongs to the universal ribosomal protein uS12 family. As to quaternary structure, part of the 30S ribosomal subunit. Contacts proteins S8 and S17. May interact with IF1 in the 30S initiation complex.

In terms of biological role, with S4 and S5 plays an important role in translational accuracy. Functionally, interacts with and stabilizes bases of the 16S rRNA that are involved in tRNA selection in the A site and with the mRNA backbone. Located at the interface of the 30S and 50S subunits, it traverses the body of the 30S subunit contacting proteins on the other side and probably holding the rRNA structure together. The combined cluster of proteins S8, S12 and S17 appears to hold together the shoulder and platform of the 30S subunit. This Alkaliphilus metalliredigens (strain QYMF) protein is Small ribosomal subunit protein uS12.